Reading from the N-terminus, the 169-residue chain is Protein-export protein SecB (169 aa).

The protein belongs to the SecB family. In terms of assembly, homotetramer, a dimer of dimers. One homotetramer interacts with 1 SecA dimer.

The protein resides in the cytoplasm. Functionally, one of the proteins required for the normal export of preproteins out of the cell cytoplasm. It is a molecular chaperone that binds to a subset of precursor proteins, maintaining them in a translocation-competent state. It also specifically binds to its receptor SecA. This chain is Protein-export protein SecB, found in Haemophilus influenzae (strain 86-028NP).